The chain runs to 602 residues: Elongation factor 4 (602 aa).

Positions 2-184 (NHIRNFSIIA…AVVAKVPPPK (183 aa)) constitute a tr-type G domain. GTP is bound by residues 14 to 19 (DHGKST) and 131 to 134 (NKMD).

The protein belongs to the TRAFAC class translation factor GTPase superfamily. Classic translation factor GTPase family. LepA subfamily.

The protein localises to the cell inner membrane. The enzyme catalyses GTP + H2O = GDP + phosphate + H(+). Functionally, required for accurate and efficient protein synthesis under certain stress conditions. May act as a fidelity factor of the translation reaction, by catalyzing a one-codon backward translocation of tRNAs on improperly translocated ribosomes. Back-translocation proceeds from a post-translocation (POST) complex to a pre-translocation (PRE) complex, thus giving elongation factor G a second chance to translocate the tRNAs correctly. Binds to ribosomes in a GTP-dependent manner. The polypeptide is Elongation factor 4 (Delftia acidovorans (strain DSM 14801 / SPH-1)).